We begin with the raw amino-acid sequence, 546 residues long: Probable ATP-dependent RNA helicase DDX56 (546 aa).

The Q motif signature appears at 7-35 (LGFEHMGLDHRLLQAVTDLGWSRPTLIQE). One can recognise a Helicase ATP-binding domain in the interval 38–218 (IPLALEGKDL…ELVLHNPVTL (181 aa)). 51 to 58 (ARTGSGKT) contributes to the ATP binding site. Residue Ser-126 is modified to Phosphoserine. Position 141 is a phosphothreonine (Thr-141). Positions 166–169 (DEAD) match the DEAD box motif. The 195-residue stretch at 230–424 (QLQQFQVVCE…PYQFHMEEIE (195 aa)) folds into the Helicase C-terminal domain. 2 disordered regions span residues 323–342 (PVKG…SDPE) and 504–546 (LVHP…AAPS). Basic residues predominate over residues 505 to 524 (VHPHKKRKKPLASKKAKKAK). Ser-531 bears the Phosphoserine mark.

It belongs to the DEAD box helicase family. DDX56/DBP9 subfamily. In terms of assembly, may form homooligomeric complexes. Interacts with IRF3. Interacts with OCT4 and POU5F1.

The protein localises to the nucleus. It localises to the nucleolus. The enzyme catalyses ATP + H2O = ADP + phosphate + H(+). Its function is as follows. Nucleolar RNA helicase that plays a role in various biological processes including innate immunity, ribosome biogenesis or nucleolus organization. Plays an essential role in maintaining nucleolar integrity in planarian stem cells. Maintains embryonic stem cells proliferation by conventional regulation of ribosome assembly and interaction with OCT4 and POU5F1 complex. Regulates antiviral innate immunity by inhibiting the virus-triggered signaling nuclear translocation of IRF3. Mechanistically, acts by disrupting the interaction between IRF3 and importin IPO5. May play a role in later stages of the processing of the pre-ribosomal particles leading to mature 60S ribosomal subunits. Has intrinsic ATPase activity. In Bos taurus (Bovine), this protein is Probable ATP-dependent RNA helicase DDX56 (DDX56).